A 439-amino-acid polypeptide reads, in one-letter code: AT-hook motif nuclear-localized protein 13 (439 aa).

3 disordered regions span residues 1 to 46 (MDSR…NSYN), 69 to 216 (QRLP…LGGT), and 342 to 439 (GRKQ…NSPQ). 2 stretches are compositionally biased toward low complexity: residues 9-31 (QQQQ…QQQQ) and 79-95 (PHQP…PQQQ). A compositionally biased stretch (polar residues) spans 109–120 (SPSSVAATQQHS). Positions 130–139 (VKKKRGRPRK) are enriched in basic residues. A Bipartite nuclear localization signal motif is present at residues 131–139 (KKKRGRPRK). Residues 131 to 143 (KKKRGRPRKYAAD) constitute a DNA-binding region (a.T hook 1). 2 stretches are compositionally biased toward gly residues: residues 143–152 (DGGGGGGGGS) and 171–183 (YGGG…GGDS). Residues 196–208 (KRNRGRPPGSGKK) constitute a DNA-binding region (a.T hook 2). Residues 217-359 (GGVGFTPHVI…GRAQNTPEPA (143 aa)) enclose the PPC domain. A compositionally biased stretch (polar residues) spans 347 to 357 (QSAGRAQNTPE). Composition is skewed to low complexity over residues 376–386 (SPRSQGQQHSS) and 403–416 (NNNN…FGNS). Residues 428-439 (MYQNLWPGNSPQ) show a composition bias toward polar residues.

The protein resides in the nucleus. Transcription factor that specifically binds AT-rich DNA sequences related to the nuclear matrix attachment regions (MARs). The chain is AT-hook motif nuclear-localized protein 13 from Arabidopsis thaliana (Mouse-ear cress).